Consider the following 304-residue polypeptide: Aspartate carbamoyltransferase catalytic subunit (304 aa).

The carbamoyl phosphate site is built by arginine 53 and threonine 54. Position 82 (lysine 82) interacts with L-aspartate. The carbamoyl phosphate site is built by arginine 103, histidine 131, and glutamine 134. The L-aspartate site is built by arginine 163 and arginine 224. Residues leucine 263 and proline 264 each contribute to the carbamoyl phosphate site.

This sequence belongs to the aspartate/ornithine carbamoyltransferase superfamily. ATCase family. Heterooligomer of catalytic and regulatory chains.

It catalyses the reaction carbamoyl phosphate + L-aspartate = N-carbamoyl-L-aspartate + phosphate + H(+). Its pathway is pyrimidine metabolism; UMP biosynthesis via de novo pathway; (S)-dihydroorotate from bicarbonate: step 2/3. Its function is as follows. Catalyzes the condensation of carbamoyl phosphate and aspartate to form carbamoyl aspartate and inorganic phosphate, the committed step in the de novo pyrimidine nucleotide biosynthesis pathway. The protein is Aspartate carbamoyltransferase catalytic subunit of Haloquadratum walsbyi (strain DSM 16790 / HBSQ001).